Reading from the N-terminus, the 123-residue chain is UPF0102 protein Pput_4400 (123 aa).

The protein belongs to the UPF0102 family.

In Pseudomonas putida (strain ATCC 700007 / DSM 6899 / JCM 31910 / BCRC 17059 / LMG 24140 / F1), this protein is UPF0102 protein Pput_4400.